Here is a 256-residue protein sequence, read N- to C-terminus: Nuclear shuttle protein (256 aa).

The short motif at 18 to 39 (NITNRYPIKRKYVAGHTRPCVR) is the Bipartite nuclear localization signal element. Residues 81–96 (SRGPSGDGRSRDYIKL) carry the Nuclear localization signal motif. An interaction with Arabidopsis thaliana NSI protein region spans residues 150–187 (ELFGPYSACYVNLRLLNNQQHRYRVLHSVKRFVSSSGD).

Belongs to the begomovirus nuclear shuttle protein family. Binds to single-stranded and double-stranded viral DNA. Interacts with the host nuclear shuttle interacting (NSI) protein. This interaction may allow NSP to recruit NSI monomers to the viral genome and thus regulate nuclear export of viral genome by NSP.

Its subcellular location is the host nucleus. It localises to the host cytoplasm. The protein resides in the host cell membrane. Its function is as follows. Binds to the genomic viral ssDNA, shuttles it into and out of the cell nucleus. Begomoviruses use 2 proteins to transport their DNA from cell to cell. The nuclear shuttle protein (NSP) shuttles it between nucleus and cytoplasm and the movement protein (MP) probably transports the DNA-NSP complex to the cell periphery and facilitates movement across the cell wall. The chain is Nuclear shuttle protein from Hewittia sublobata (Coralbush).